A 3241-amino-acid chain; its full sequence is PHD finger protein rhinoceros (3241 aa).

Residues 1–16 (MSQRGKRGNQQHHQSH) show a composition bias toward basic residues. The disordered stretch occupies residues 1 to 126 (MSQRGKRGNQ…GASSSSSWQA (126 aa)). Low complexity-rich tracts occupy residues 42 to 55 (PPNG…AEVT) and 90 to 126 (RAAA…SWQA). The PHD-type 1 zinc-finger motif lies at 312 to 362 (NVICDVCRSPDSEEANEMVFCDNCNICVHQACYGITAIPSGQWLCRTCSMG). The C2HC pre-PHD-type zinc finger occupies 364–398 (KPDCVLCPNKGGAMKSNKSGKHWAHVSCALWIPEV). The segment at 422–481 (LICVLCRKRVGSCIQCSVKPCKTAYHVTCAFQHGLEMRAIIEEGNAEDGVKLRSYCQKHS) adopts a PHD-type 2 zinc-finger fold. Disordered stretches follow at residues 482 to 501 (MSKG…ASVA), 508 to 554 (NRYG…ARAQ), 737 to 1266 (SGKQ…VATP), 1279 to 1483 (PQRQ…STKV), 1500 to 1613 (PKTN…SETR), and 1632 to 1746 (NLGA…QHLL). The segment covering 540–554 (KTELTSEERNQARAQ) has biased composition (basic and acidic residues). Residues 762–777 (KKLNNGILSSRTSSPE) show a composition bias toward polar residues. Low complexity predominate over residues 807–874 (KSSAAAATST…SGSSSAGSGV (68 aa)). Positions 931–943 (ERCRNRQEPERGA) are enriched in basic and acidic residues. Residues 949–965 (QSKSVPNRSQASRSKPT) show a composition bias toward polar residues. Residues 995–1007 (DADESVSSDESEE) are compositionally biased toward acidic residues. Positions 1019–1031 (STTTSGLATTGSA) are enriched in low complexity. Residues 1060–1075 (TVESNVSDSQNQQTIR) show a composition bias toward polar residues. Low complexity predominate over residues 1087 to 1104 (TAATTSSTSQAASSTSKA). 2 stretches are compositionally biased toward polar residues: residues 1117-1126 (IGNSTKTKPN) and 1151-1163 (NMRS…TLQP). The span at 1184 to 1211 (KVKDSSSRVSNEADKSSLEKVRPKEHLQ) shows a compositional bias: basic and acidic residues. The segment covering 1313–1327 (VTSATISGSGSSVPA) has biased composition (polar residues). At Thr-1346 the chain carries Phosphothreonine. Ser-1352 bears the Phosphoserine mark. Thr-1364 is modified (phosphothreonine). Residues 1382–1426 (SSSSSGDSESSSSSSSSGSSSSSGGSDSDSESQASNSENPSSREP) are compositionally biased toward low complexity. Thr-1456 is subject to Phosphothreonine. Over residues 1463 to 1483 (NVLNIPSTRSRQNSTTKSTKV) the composition is skewed to polar residues. Residues 1541–1558 (SPEKTVSRCKSRAEESPK) are compositionally biased toward basic and acidic residues. Residues 1576–1594 (KGTSSLDKLLNKKQQQMNH) are compositionally biased toward polar residues. The span at 1599–1608 (TPPPISPTPP) shows a compositional bias: pro residues. Residues 1664–1675 (TAPTRTQLSASA) are compositionally biased toward polar residues. Residues 1688 to 1699 (PAAPLPASPTPT) are compositionally biased toward pro residues. Residues 1717-1731 (RRMRWRSRRRRRRRS) are compositionally biased toward basic residues. Coiled-coil stretches lie at residues 1741 to 1770 (HTQH…ASKY) and 1893 to 1925 (SEED…KEAV). 11 disordered regions span residues 2037-2061 (LEKS…GQPA), 2124-2148 (AERR…PVVT), 2203-2227 (NNTN…TPNN), 2346-2454 (TPPV…GGVT), 2598-2629 (ATGT…PAPN), 2667-2691 (SEEV…ARSQ), 2768-2811 (NDDS…NSSS), 2832-2911 (GAGA…SVDE), 2964-3015 (NKRG…TTTM), 3042-3169 (KAET…EAAM), and 3184-3241 (VNVG…CEVR). Polar residues predominate over residues 2359 to 2381 (KRTSVSGSNLSKKQTHKSPQLPQ). The segment covering 2392–2402 (PLQPPTPPAPV) has biased composition (pro residues). Residues 2430–2439 (GSGGSGAPGR) show a composition bias toward gly residues. Composition is skewed to polar residues over residues 2598 to 2611 (ATGT…QHSG) and 2673 to 2689 (DSDS…SDAR). The segment covering 2855-2865 (NNDNNGKTGAA) has biased composition (polar residues). A compositionally biased stretch (basic and acidic residues) spans 2876–2887 (KTLESSEDDHQA). Phosphoserine occurs at positions 2880 and 2881. A compositionally biased stretch (polar residues) spans 2899–2911 (ANETPSGVSSVDE). Residues 2964-2974 (NKRGVVVKDGE) show a composition bias toward basic and acidic residues. The segment covering 2984-3002 (KRPKSSKPKKEKKEKKRQK) has biased composition (basic residues). Residues 3003–3015 (QQQLILSSSTTTM) are compositionally biased toward low complexity. A phosphoserine mark is found at Ser-3104 and Ser-3110. 2 stretches are compositionally biased toward polar residues: residues 3115 to 3130 (LLNS…NTSP) and 3184 to 3197 (VNVG…NSLP). The span at 3198-3218 (SASGTGSASSNSCNSNSINNN) shows a compositional bias: low complexity. Residues 3219 to 3230 (GSGGGRASGEGG) are compositionally biased toward gly residues.

The protein belongs to the JADE family.

It localises to the nucleus. In terms of biological role, may function as a negative regulator of the EGFR/Ras/MAPK signaling pathway during eye development. The protein is PHD finger protein rhinoceros (rno) of Drosophila melanogaster (Fruit fly).